A 201-amino-acid polypeptide reads, in one-letter code: Anthranilate synthase component 2 (201 aa).

Positions 3–196 constitute a Glutamine amidotransferase type-1 domain; the sequence is NILFIDNFDS…IDWALSSTPA (194 aa). 57-59 contributes to the L-glutamine binding site; sequence GPG. The Nucleophile; for GATase activity role is filled by Cys-84. L-glutamine-binding positions include Gln-88 and 134 to 135; that span reads SL. Active-site for GATase activity residues include His-170 and Glu-172.

As to quaternary structure, heterotetramer consisting of two non-identical subunits: a beta subunit (TrpG) and a large alpha subunit (TrpE).

It catalyses the reaction chorismate + L-glutamine = anthranilate + pyruvate + L-glutamate + H(+). It functions in the pathway amino-acid biosynthesis; L-tryptophan biosynthesis; L-tryptophan from chorismate: step 1/5. Its function is as follows. Part of a heterotetrameric complex that catalyzes the two-step biosynthesis of anthranilate, an intermediate in the biosynthesis of L-tryptophan. In the first step, the glutamine-binding beta subunit (TrpG) of anthranilate synthase (AS) provides the glutamine amidotransferase activity which generates ammonia as a substrate that, along with chorismate, is used in the second step, catalyzed by the large alpha subunit of AS (TrpE) to produce anthranilate. In the absence of TrpG, TrpE can synthesize anthranilate directly from chorismate and high concentrations of ammonia. The protein is Anthranilate synthase component 2 (trpG) of Vibrio cholerae serotype O1 (strain ATCC 39315 / El Tor Inaba N16961).